The chain runs to 90 residues: Antitoxin epsilon 1 (90 aa).

Belongs to the epsilon antitoxin family. In terms of assembly, in the presence of the zeta toxin, forms an inactive PezA(2)PezT(2) heterotetramer.

Antitoxin component of a type II toxin-antitoxin (TA) system. Neutralizes the toxic effect of zeta toxin. Part of a postsegregational killing (PSK) system involved in the killing of plasmid-free cells. Continuous synthesis of the epsilon antitoxin is required to counteract the zeta toxin. In Enterococcus faecalis (Streptococcus faecalis), this protein is Antitoxin epsilon 1.